The chain runs to 318 residues: Ribose-phosphate pyrophosphokinase 2 (318 aa).

96–101 (RQDKKD) is a binding site for ATP. 4 residues coordinate Mg(2+): Asp-128, His-130, Asp-139, and Asp-143. His-130 serves as a coordination point for ATP. Residues 212-227 (KDRVAILVDDMADTCG) are binding of phosphoribosylpyrophosphate.

This sequence belongs to the ribose-phosphate pyrophosphokinase family. As to quaternary structure, homodimer. The active form is probably a hexamer composed of 3 homodimers. Mg(2+) serves as cofactor.

It catalyses the reaction D-ribose 5-phosphate + ATP = 5-phospho-alpha-D-ribose 1-diphosphate + AMP + H(+). It functions in the pathway metabolic intermediate biosynthesis; 5-phospho-alpha-D-ribose 1-diphosphate biosynthesis; 5-phospho-alpha-D-ribose 1-diphosphate from D-ribose 5-phosphate (route I): step 1/1. Activated by magnesium and inorganic phosphate. Competitively or non-competitively inhibited by ADP, 2,3-bisphosphoglyceride or GDP. Catalyzes the synthesis of phosphoribosylpyrophosphate (PRPP) that is essential for nucleotide synthesis. This chain is Ribose-phosphate pyrophosphokinase 2 (PRPS2), found in Homo sapiens (Human).